Here is a 374-residue protein sequence, read N- to C-terminus: Chaperone protein DnaJ (374 aa).

The J domain occupies 4–68 (DYYDILGVSR…ETRARYDRFG (65 aa)). The segment at 133 to 215 (GGEKQIRITH…CGGNGQAQVT (83 aa)) adopts a CR-type zinc-finger fold. Zn(2+) contacts are provided by C146, C149, C163, C166, C189, C192, C203, and C206. 4 CXXCXGXG motif repeats span residues 146 to 153 (CTTCNGSG), 163 to 170 (CGTCGGAG), 189 to 196 (CPTCNGKG), and 203 to 210 (CETCGGNG).

This sequence belongs to the DnaJ family. As to quaternary structure, homodimer. Zn(2+) serves as cofactor.

Its subcellular location is the cytoplasm. Participates actively in the response to hyperosmotic and heat shock by preventing the aggregation of stress-denatured proteins and by disaggregating proteins, also in an autonomous, DnaK-independent fashion. Unfolded proteins bind initially to DnaJ; upon interaction with the DnaJ-bound protein, DnaK hydrolyzes its bound ATP, resulting in the formation of a stable complex. GrpE releases ADP from DnaK; ATP binding to DnaK triggers the release of the substrate protein, thus completing the reaction cycle. Several rounds of ATP-dependent interactions between DnaJ, DnaK and GrpE are required for fully efficient folding. Also involved, together with DnaK and GrpE, in the DNA replication of plasmids through activation of initiation proteins. In Cyanothece sp. (strain PCC 7425 / ATCC 29141), this protein is Chaperone protein DnaJ.